Reading from the N-terminus, the 107-residue chain is L-amino-acid oxidase (107 aa).

35 to 38 (GPMR) provides a ligand contact to FAD. Positions 38 and 49 each coordinate substrate.

Belongs to the flavin monoamine oxidase family. FIG1 subfamily. As to quaternary structure, homodimer; non-covalently linked. The cofactor is FAD. In terms of processing, N-glycosylated. As to expression, expressed by the venom gland.

The protein localises to the secreted. The enzyme catalyses an L-alpha-amino acid + O2 + H2O = a 2-oxocarboxylate + H2O2 + NH4(+). It catalyses the reaction L-leucine + O2 + H2O = 4-methyl-2-oxopentanoate + H2O2 + NH4(+). The catalysed reaction is L-phenylalanine + O2 + H2O = 3-phenylpyruvate + H2O2 + NH4(+). It carries out the reaction L-tryptophan + O2 + H2O = indole-3-pyruvate + H2O2 + NH4(+). The enzyme catalyses L-methionine + O2 + H2O = 4-methylsulfanyl-2-oxobutanoate + H2O2 + NH4(+). It catalyses the reaction L-isoleucine + O2 + H2O = (S)-3-methyl-2-oxopentanoate + H2O2 + NH4(+). The catalysed reaction is L-arginine + O2 + H2O = 5-guanidino-2-oxopentanoate + H2O2 + NH4(+). It carries out the reaction L-histidine + O2 + H2O = 3-(imidazol-5-yl)pyruvate + H2O2 + NH4(+). In terms of biological role, catalyzes an oxidative deamination of predominantly hydrophobic and aromatic L-amino acids, thus producing hydrogen peroxide that may contribute to the diverse toxic effects of this enzyme. Shows high activity on L-Met, moderate activity on L-Trp, L-Leu, L-His, L-Phe, L-Arg, L-Ile, low activity on L-Val, L-Glu, L-Lys, L-Gln, L-Asn, L-Tyr, L-Ala, and no activity on L-Asp, L-Ser, L-Pro, L-Gly, L-Thr and L-Cys. Shows antimicrobial activity inhibiting the growth of both Gram-negative and Gram-positive bacteria. Also inhibits platelet aggregation induced by ADP or collagen. Effects of snake L-amino oxidases on platelets are controversial, since they either induce aggregation or inhibit agonist-induced aggregation. These different effects are probably due to different experimental conditions. This protein may also induce hemorrhage, hemolysis, edema, apoptosis, and have antiparasitic activities. This Macrovipera lebetinus (Levantine viper) protein is L-amino-acid oxidase.